Consider the following 132-residue polypeptide: Interleukin-4 (132 aa).

Residues 1–24 (MGLTSQLIPTLVCLLALTSTFVHG) form the signal peptide. N-linked (GlcNAc...) asparagine glycosylation is found at N28, N45, N62, and N101. Cystine bridges form between C48/C84 and C70/C104.

This sequence belongs to the IL-4/IL-13 family.

The protein resides in the secreted. In terms of biological role, participates in at least several B-cell activation processes as well as of other cell types. It is a costimulator of DNA-synthesis. It induces the expression of class II MHC molecules on resting B-cells. It enhances both secretion and cell surface expression of IgE and IgG1. It also regulates the expression of the low affinity Fc receptor for IgE (CD23) on both lymphocytes and monocytes. Positively regulates IL31RA expression in macrophages. Stimulates autophagy in dendritic cells by interfering with mTORC1 signaling and through the induction of RUFY4. This Ailuropoda melanoleuca (Giant panda) protein is Interleukin-4 (IL4).